The primary structure comprises 101 residues: Ubiquitin-related modifier 1 homolog (101 aa).

Glycine 101 bears the 1-thioglycine mark. Glycine 101 is covalently cross-linked (Glycyl lysine isopeptide (Gly-Lys) (interchain with K-? in acceptor proteins)).

This sequence belongs to the URM1 family. Interacts with cer. In terms of processing, C-terminal thiocarboxylation occurs in 2 steps, it is first acyl-adenylated (-COAMP) via the hesA/moeB/thiF part of the MOCS3 homolog, then thiocarboxylated (-COSH) via the rhodanese domain of the MOCS3 homolog.

The protein resides in the cytoplasm. It participates in tRNA modification; 5-methoxycarbonylmethyl-2-thiouridine-tRNA biosynthesis. Acts as a sulfur carrier required for 2-thiolation of mcm(5)S(2)U at tRNA wobble positions of cytosolic tRNA(Lys), tRNA(Glu) and tRNA(Gln). Serves as sulfur donor in tRNA 2-thiolation reaction by being thiocarboxylated (-COSH) at its C-terminus by MOCS3. The sulfur is then transferred to tRNA to form 2-thiolation of mcm(5)S(2)U. Also acts as a ubiquitin-like protein (UBL) that is covalently conjugated via an isopeptide bond to lysine residues of target proteins such as Prx2/Jafrac1, Ciao1, Eip71CD and GILT1. The thiocarboxylated form serves as substrate for conjugation and oxidative stress specifically induces the formation of UBL-protein conjugates. The protein is Ubiquitin-related modifier 1 homolog of Drosophila erecta (Fruit fly).